Consider the following 178-residue polypeptide: Probable DNA-directed RNA polymerase subunit delta (178 aa).

Positions 14–81 constitute an HTH HARE-type domain; the sequence is LSLIDVAHFI…GNNTWGLRAW (68 aa). Disordered stretches follow at residues 88-122 and 141-178; these read DEEV…DYDD and LDED…PEDK. 3 stretches are compositionally biased toward acidic residues: residues 105–122, 141–150, and 161–178; these read DDED…DYDD, LDEDEDDDDH, and TVED…PEDK.

It belongs to the RpoE family. In terms of assembly, RNAP is composed of a core of 2 alpha, a beta and a beta' subunits. The core is associated with a delta subunit and one of several sigma factors.

In terms of biological role, participates in both the initiation and recycling phases of transcription. In the presence of the delta subunit, RNAP displays an increased specificity of transcription, a decreased affinity for nucleic acids, and an increased efficiency of RNA synthesis because of enhanced recycling. The protein is Probable DNA-directed RNA polymerase subunit delta of Listeria monocytogenes serovar 1/2a (strain ATCC BAA-679 / EGD-e).